Consider the following 124-residue polypeptide: Probable S-adenosyl-L-methionine-binding protein VNG_1115H (124 aa).

The TsaA-like domain maps to 3–124 (ATPIGYADTR…PVLDLKPALD (122 aa)). Residues 20 to 22 (PRQ), 58 to 59 (DD), arginine 78, and 111 to 114 (AHGS) contribute to the S-adenosyl-L-methionine site.

It belongs to the tRNA methyltransferase O family.

In Halobacterium salinarum (strain ATCC 700922 / JCM 11081 / NRC-1) (Halobacterium halobium), this protein is Probable S-adenosyl-L-methionine-binding protein VNG_1115H.